A 213-amino-acid polypeptide reads, in one-letter code: Putative 3-methyladenine DNA glycosylase (213 aa).

Residues 165 to 187 are disordered; that stretch reads GTPVPPDQVRNGPRTGVSGDGGV.

This sequence belongs to the DNA glycosylase MPG family.

This is Putative 3-methyladenine DNA glycosylase from Streptomyces avermitilis (strain ATCC 31267 / DSM 46492 / JCM 5070 / NBRC 14893 / NCIMB 12804 / NRRL 8165 / MA-4680).